Here is a 545-residue protein sequence, read N- to C-terminus: Membrane protein insertase YidC (545 aa).

The chain crosses the membrane as a helical span at residues Asn6–Asp26. The disordered stretch occupies residues Ser44 to Thr65. 4 consecutive transmembrane segments (helical) span residues Leu346–Leu366, Gly424–Leu444, Leu461–Met481, and Val504–Gly524.

Belongs to the OXA1/ALB3/YidC family. Type 1 subfamily. As to quaternary structure, interacts with the Sec translocase complex via SecD. Specifically interacts with transmembrane segments of nascent integral membrane proteins during membrane integration.

The protein localises to the cell inner membrane. Functionally, required for the insertion and/or proper folding and/or complex formation of integral membrane proteins into the membrane. Involved in integration of membrane proteins that insert both dependently and independently of the Sec translocase complex, as well as at least some lipoproteins. Aids folding of multispanning membrane proteins. In Shewanella pealeana (strain ATCC 700345 / ANG-SQ1), this protein is Membrane protein insertase YidC.